The sequence spans 396 residues: Chalcone synthase (396 aa).

C167 is a catalytic residue.

This sequence belongs to the thiolase-like superfamily. Chalcone/stilbene synthases family.

It catalyses the reaction (E)-4-coumaroyl-CoA + 3 malonyl-CoA + 3 H(+) = 2',4,4',6'-tetrahydroxychalcone + 3 CO2 + 4 CoA. The protein operates within secondary metabolite biosynthesis; flavonoid biosynthesis. Functionally, the primary product of this enzyme is 4,2',4',6'-tetrahydroxychalcone (also termed naringenin-chalcone or chalcone) which can under specific conditions spontaneously isomerize into naringenin. This chain is Chalcone synthase (CHS), found in Chrysosplenium americanum (American golden saxifrage).